The following is a 137-amino-acid chain: Small ribosomal subunit protein uS11 (137 aa).

The span at 1–10 shows a compositional bias: polar residues; that stretch reads MPPKSRSTGP. 2 disordered regions span residues 1 to 27 and 116 to 137; these read MPPK…IPHG and GTIS…RRRV. Positions 12–21 are enriched in basic residues; that stretch reads KTQKTRRRDK.

This sequence belongs to the universal ribosomal protein uS11 family. As to quaternary structure, part of the 30S ribosomal subunit. Interacts with proteins S7 and S18. Binds to IF-3.

Functionally, located on the platform of the 30S subunit, it bridges several disparate RNA helices of the 16S rRNA. Forms part of the Shine-Dalgarno cleft in the 70S ribosome. The sequence is that of Small ribosomal subunit protein uS11 from Rhodococcus erythropolis (strain PR4 / NBRC 100887).